A 262-amino-acid chain; its full sequence is Phosphatidylserine decarboxylase proenzyme (262 aa).

Active-site charge relay system; for autoendoproteolytic cleavage activity residues include Asp86, His142, and Ser226. Ser226 functions as the Schiff-base intermediate with substrate; via pyruvic acid; for decarboxylase activity in the catalytic mechanism. Position 226 is a pyruvic acid (Ser); by autocatalysis (Ser226).

This sequence belongs to the phosphatidylserine decarboxylase family. PSD-B subfamily. Prokaryotic type I sub-subfamily. As to quaternary structure, heterodimer of a large membrane-associated beta subunit and a small pyruvoyl-containing alpha subunit. Requires pyruvate as cofactor. Is synthesized initially as an inactive proenzyme. Formation of the active enzyme involves a self-maturation process in which the active site pyruvoyl group is generated from an internal serine residue via an autocatalytic post-translational modification. Two non-identical subunits are generated from the proenzyme in this reaction, and the pyruvate is formed at the N-terminus of the alpha chain, which is derived from the carboxyl end of the proenzyme. The autoendoproteolytic cleavage occurs by a canonical serine protease mechanism, in which the side chain hydroxyl group of the serine supplies its oxygen atom to form the C-terminus of the beta chain, while the remainder of the serine residue undergoes an oxidative deamination to produce ammonia and the pyruvoyl prosthetic group on the alpha chain. During this reaction, the Ser that is part of the protease active site of the proenzyme becomes the pyruvoyl prosthetic group, which constitutes an essential element of the active site of the mature decarboxylase.

Its subcellular location is the cell membrane. It catalyses the reaction a 1,2-diacyl-sn-glycero-3-phospho-L-serine + H(+) = a 1,2-diacyl-sn-glycero-3-phosphoethanolamine + CO2. Its pathway is phospholipid metabolism; phosphatidylethanolamine biosynthesis; phosphatidylethanolamine from CDP-diacylglycerol: step 2/2. In terms of biological role, catalyzes the formation of phosphatidylethanolamine (PtdEtn) from phosphatidylserine (PtdSer). The sequence is that of Phosphatidylserine decarboxylase proenzyme from Bacillus thuringiensis (strain Al Hakam).